The sequence spans 147 residues: Large ribosomal subunit protein bL9 (147 aa).

This sequence belongs to the bacterial ribosomal protein bL9 family.

In terms of biological role, binds to the 23S rRNA. In Clostridium botulinum (strain Alaska E43 / Type E3), this protein is Large ribosomal subunit protein bL9.